The sequence spans 726 residues: Probable dipeptidyl-peptidase 5 (726 aa).

Residues 1–19 (MGALQWLSITAAAASAVSA) form the signal peptide. Asn-97, Asn-153, Asn-259, Asn-398, Asn-453, and Asn-529 each carry an N-linked (GlcNAc...) asparagine glycan. Residue Ser-564 is the Charge relay system of the active site. Residue Asn-611 is glycosylated (N-linked (GlcNAc...) asparagine). Residues Asp-647 and His-679 each act as charge relay system in the active site.

The protein belongs to the peptidase S9C family.

It is found in the secreted. Its function is as follows. Extracellular dipeptidyl-peptidase which removes N-terminal dipeptides sequentially from polypeptides having unsubstituted N-termini. This is Probable dipeptidyl-peptidase 5 (dpp5) from Aspergillus niger.